The primary structure comprises 282 residues: Aquaporin PIP2-7 (282 aa).

The segment at 1 to 21 is disordered; it reads MSKEVSVEGEQPPVKDYTDPP. Topologically, residues 1 to 38 are cytoplasmic; it reads MSKEVSVEGEQPPVKDYTDPPPEPLLNFGELRLWSFYR. The helical transmembrane segment at 39–59 threads the bilayer; the sequence is ALIAEFVATLLFLYVTIATVI. Residues 60-71 lie on the Extracellular side of the membrane; that stretch reads GHKEQNAADQCS. Residues 72–92 form a helical membrane-spanning segment; the sequence is GVGLLGIAWAFGGMIFILVYC. The Cytoplasmic segment spans residues 93–120; sequence TAGISGGHINPAVTLGLFLARKVSLIRA. The NPA 1 motif lies at 102–104; that stretch reads NPA. The helical transmembrane segment at 121–141 threads the bilayer; that stretch reads LLYMVAQCLGAIVGVGIVKGI. The Extracellular segment spans residues 142-162; sequence MKHQYNSLGGGANVVAAGYSK. The helical transmembrane segment at 163 to 183 threads the bilayer; it reads GTALGAEIIGTFVLVYTVFSA. Topologically, residues 184–196 are cytoplasmic; that stretch reads TDPKRSARDSHVP. The helical transmembrane segment at 197–217 threads the bilayer; the sequence is VLAPLPIGFAVFMVHLATIPI. At 218–244 the chain is on the extracellular side; sequence TGTGINPARSLGAAVIYNQDKPWDDHW. The NPA 2 signature appears at 223 to 225; that stretch reads NPA. The helical transmembrane segment at 245-265 threads the bilayer; the sequence is ILWVGPFVGALAAAAYHQYIL. Over 266–282 the chain is Cytoplasmic; that stretch reads RAAAIKALGSFRSNPSN.

The protein belongs to the MIP/aquaporin (TC 1.A.8) family. PIP (TC 1.A.8.11) subfamily. In terms of tissue distribution, expressed in roots, leaves and fruits.

It localises to the cell membrane. Functionally, water channel required to facilitate the transport of water across cell membrane; mercury-insensitive. Contributes to the tolerance to multiple abiotic stresses including salt (NaCl), cold and water deprivation, by modulating cytosolic K(+)/Na(+) ratio, maintaining osmotic balance, and reducing membrane injury (e.g. oxidative injury). Also regulates the expression of abscisic acid (ABA)- biosynthetic and -responsive genes during dehydration and salt stresses. The chain is Aquaporin PIP2-7 from Musa acuminata (Banana).